Here is a 355-residue protein sequence, read N- to C-terminus: Methylthioribose-1-phosphate isomerase (355 aa).

Substrate is bound by residues 52-54, arginine 95, and glutamine 204; that span reads RGA. Aspartate 245 acts as the Proton donor in catalysis. 255–256 lines the substrate pocket; sequence NK.

It belongs to the eIF-2B alpha/beta/delta subunits family. MtnA subfamily.

The enzyme catalyses 5-(methylsulfanyl)-alpha-D-ribose 1-phosphate = 5-(methylsulfanyl)-D-ribulose 1-phosphate. Its pathway is amino-acid biosynthesis; L-methionine biosynthesis via salvage pathway; L-methionine from S-methyl-5-thio-alpha-D-ribose 1-phosphate: step 1/6. Catalyzes the interconversion of methylthioribose-1-phosphate (MTR-1-P) into methylthioribulose-1-phosphate (MTRu-1-P). The protein is Methylthioribose-1-phosphate isomerase of Acaryochloris marina (strain MBIC 11017).